A 997-amino-acid polypeptide reads, in one-letter code: LPS-assembly protein LptD (997 aa).

A signal peptide spans 1-27 (MLYSPLYQSIRLILFGALGLSSLTVSA).

The protein belongs to the LptD family. As to quaternary structure, component of the lipopolysaccharide transport and assembly complex. Interacts with LptE and LptA.

The protein localises to the cell outer membrane. Its function is as follows. Together with LptE, is involved in the assembly of lipopolysaccharide (LPS) at the surface of the outer membrane. This chain is LPS-assembly protein LptD, found in Psychrobacter cryohalolentis (strain ATCC BAA-1226 / DSM 17306 / VKM B-2378 / K5).